A 262-amino-acid chain; its full sequence is tRNA pseudouridine synthase A (262 aa).

Asp-51 (nucleophile) is an active-site residue. Tyr-109 is a substrate binding site.

Belongs to the tRNA pseudouridine synthase TruA family. As to quaternary structure, homodimer.

It catalyses the reaction uridine(38/39/40) in tRNA = pseudouridine(38/39/40) in tRNA. In terms of biological role, formation of pseudouridine at positions 38, 39 and 40 in the anticodon stem and loop of transfer RNAs. The polypeptide is tRNA pseudouridine synthase A (Actinobacillus pleuropneumoniae serotype 3 (strain JL03)).